A 118-amino-acid chain; its full sequence is Acidic phospholipase A2 CM-I (118 aa).

Cystine bridges form between Cys-11–Cys-70, Cys-26–Cys-117, Cys-28–Cys-44, Cys-43–Cys-98, Cys-50–Cys-91, Cys-59–Cys-84, and Cys-77–Cys-89. Residues Tyr-27, Gly-29, and Gly-31 each contribute to the Ca(2+) site. His-47 is a catalytic residue. Residue Asp-48 coordinates Ca(2+). Asp-92 is a catalytic residue.

It belongs to the phospholipase A2 family. Group I subfamily. D49 sub-subfamily. Ca(2+) is required as a cofactor. Expressed by the venom gland.

The protein resides in the secreted. The enzyme catalyses a 1,2-diacyl-sn-glycero-3-phosphocholine + H2O = a 1-acyl-sn-glycero-3-phosphocholine + a fatty acid + H(+). Snake venom phospholipase A2 (PLA2) that causes myonecrosis when injected intramuscularly, shows indirect hemolytic activity, abolishes twitches evoked by indirect stimulation earlier than those by direct stimulation (in the mouse phrenic nerve-diaphragm preparation) but does not produce complete neuromuscular block (up to 30 ug/ml) (in the chick biventer cervicis nerve-muscle preparation). PLA2 catalyzes the calcium-dependent hydrolysis of the 2-acyl groups in 3-sn-phosphoglycerides. This Naja mossambica (Mozambique spitting cobra) protein is Acidic phospholipase A2 CM-I.